Reading from the N-terminus, the 416-residue chain is Splicing factor U2AF 50 kDa subunit (416 aa).

Residues 1-10 (MGYDDRERDR) are compositionally biased toward basic and acidic residues. The interval 1 to 47 (MGYDDRERDRERRRHRSRSRDRHRERSRDRRHHRNSRRKPSLYWDVP) is disordered. 2 stretches are compositionally biased toward basic residues: residues 11-21 (ERRRHRSRSRD) and 29-40 (DRRHHRNSRRKP). 3 RRM domains span residues 93 to 175 (RRLY…RPHD), 207 to 285 (HKIF…RASV), and 318 to 408 (EVLC…YFDP).

This sequence belongs to the splicing factor SR family. Forms a heterodimer with the U2AF small subunit.

It localises to the nucleus. Functionally, necessary for the splicing of pre-mRNA. Binds to the polypyrimidine tract of introns early during spliceosome assembly. This Drosophila melanogaster (Fruit fly) protein is Splicing factor U2AF 50 kDa subunit (U2af50).